The following is a 194-amino-acid chain: Orotate phosphoribosyltransferase (194 aa).

5-phospho-alpha-D-ribose 1-diphosphate contacts are provided by residues Lys-98 and 122-130 (EDVLTTGGS). 2 residues coordinate orotate: Thr-126 and Arg-154.

The protein belongs to the purine/pyrimidine phosphoribosyltransferase family. PyrE subfamily. As to quaternary structure, homodimer. Mg(2+) is required as a cofactor.

The catalysed reaction is orotidine 5'-phosphate + diphosphate = orotate + 5-phospho-alpha-D-ribose 1-diphosphate. It functions in the pathway pyrimidine metabolism; UMP biosynthesis via de novo pathway; UMP from orotate: step 1/2. Catalyzes the transfer of a ribosyl phosphate group from 5-phosphoribose 1-diphosphate to orotate, leading to the formation of orotidine monophosphate (OMP). The polypeptide is Orotate phosphoribosyltransferase (Deinococcus radiodurans (strain ATCC 13939 / DSM 20539 / JCM 16871 / CCUG 27074 / LMG 4051 / NBRC 15346 / NCIMB 9279 / VKM B-1422 / R1)).